Reading from the N-terminus, the 117-residue chain is Neurotoxic enhancer CSTX-13 (117 aa).

Positions 1–20 are cleaved as a signal peptide; that stretch reads MKVLVIFAVLSLVIFSNCSA. A propeptide spanning residues 21-47 is cleaved from the precursor; sequence ETDEDFFGEESFEADDIIPFIAKEQVR. Intrachain disulfides connect Cys50/Cys65, Cys57/Cys74, Cys64/Cys95, and Cys76/Cys93. Residues 82 to 87 constitute a propeptide that is removed on maturation; that stretch reads RSETAR. Threonine amide is present on Thr116.

This sequence belongs to the neurotoxin 19 (CSTX) family. 12 subfamily. In terms of assembly, heterodimer of A and B chains; disulfide-linked. Interacts with CSTX-1 (AC P81694) (Kd=430 nM), and with CSTX-9 (AC P58604) (Kd=370 nM). Expressed by the venom gland.

It is found in the secreted. The protein resides in the target cell membrane. In terms of biological role, synergistic toxin that induces or increases a cytolytic effect when combined with CSTX-1 (AC P81694) or CSTX-9 (AC P58604). When alone, has a weak insecticidal activity, with an unknown molecular target. The chain is Neurotoxic enhancer CSTX-13 from Cupiennius salei (American wandering spider).